A 149-amino-acid polypeptide reads, in one-letter code: Transcriptional regulator MraZ (149 aa).

SpoVT-AbrB domains lie at 7-54 and 83-126; these read KYVN…GISH and AVQL…QPQN.

The protein belongs to the MraZ family. In terms of assembly, forms oligomers.

The protein localises to the cytoplasm. It is found in the nucleoid. The chain is Transcriptional regulator MraZ from Rickettsia felis (strain ATCC VR-1525 / URRWXCal2) (Rickettsia azadi).